The sequence spans 155 residues: MIDKNVVTRIVDEWLEGKDYFLVDVTVSPDDKIVVEIDHAEGVWIDDCVELSRYIESKLDREEEDYELEVGSAGIGQPFKVLQQYLIHIGKEVEILTKEGKKLEGVLKDANEENFTVTIEKKVKPEGAKRPKLVEEDITFAYDEIKYTKYLISFK.

It belongs to the RimP family.

The protein resides in the cytoplasm. Its function is as follows. Required for maturation of 30S ribosomal subunits. The polypeptide is Ribosome maturation factor RimP (Phocaeicola vulgatus (strain ATCC 8482 / DSM 1447 / JCM 5826 / CCUG 4940 / NBRC 14291 / NCTC 11154) (Bacteroides vulgatus)).